Here is a 114-residue protein sequence, read N- to C-terminus: Large ribosomal subunit protein bL20 (114 aa).

It belongs to the bacterial ribosomal protein bL20 family.

In terms of biological role, binds directly to 23S ribosomal RNA and is necessary for the in vitro assembly process of the 50S ribosomal subunit. It is not involved in the protein synthesizing functions of that subunit. This chain is Large ribosomal subunit protein bL20, found in Anaeromyxobacter dehalogenans (strain 2CP-1 / ATCC BAA-258).